We begin with the raw amino-acid sequence, 163 residues long: Protein-export protein SecB (163 aa).

The protein belongs to the SecB family. As to quaternary structure, homotetramer, a dimer of dimers. One homotetramer interacts with 1 SecA dimer.

It is found in the cytoplasm. Functionally, one of the proteins required for the normal export of preproteins out of the cell cytoplasm. It is a molecular chaperone that binds to a subset of precursor proteins, maintaining them in a translocation-competent state. It also specifically binds to its receptor SecA. This chain is Protein-export protein SecB, found in Burkholderia cenocepacia (strain ATCC BAA-245 / DSM 16553 / LMG 16656 / NCTC 13227 / J2315 / CF5610) (Burkholderia cepacia (strain J2315)).